Consider the following 479-residue polypeptide: Envelope glycoprotein C homolog (479 aa).

Residues 1-22 (MASLARAMLALLALYAAAIAAA) form the signal peptide. Residues 23–451 (PSTTTALDTT…SVSWPVVSSM (429 aa)) are Virion surface-facing. The disordered stretch occupies residues 26-96 (TTALDTTPNG…RVHGDKATAH (71 aa)). Asn40 is a glycosylation site (N-linked (GlcNAc...) asparagine; by host). The segment covering 48 to 57 (PSPPPTPAPA) has biased composition (pro residues). The segment at 75-82 (SRRKPPRN) is HDB1. Positions 75-87 (SRRKPPRNNNRTR) are enriched in basic residues. Asn84 is a glycosylation site (N-linked (GlcNAc...) asparagine; by host). The HDB2 stretch occupies residues 95–101 (AHGRKRI). Cys103 and Cys120 form a disulfide bridge. An HDB3 region spans residues 135–140 (YRRGRF). 6 N-linked (GlcNAc...) asparagine; by host glycosylation sites follow: Asn169, Asn192, Asn220, Asn228, Asn285, and Asn302. Disulfide bonds link Cys256-Cys326, Cys365-Cys418, and Cys369-Cys392. A helical transmembrane segment spans residues 452–472 (IVVIAGIGILAIVLVIMATCV). The Cytoplasmic portion of the chain corresponds to 473–479 (YYRQAGP).

Belongs to the herpesviridae glycoprotein C family. In terms of assembly, interacts with host complement component C3; this interaction inhibits host immune response by disregulating complement cascade.

It is found in the virion membrane. Essential for the initial attachment to heparan sulfate moieties of the host cell surface proteoglycans. Plays also a role in host immune evasion by inhibiting the host complement cascade activation. In Suid herpesvirus 1 (strain Indiana-Funkhauser / Becker) (SuHV-1), this protein is Envelope glycoprotein C homolog (gC).